The sequence spans 457 residues: Putative metabolite transport protein YwtG (457 aa).

12 consecutive transmembrane segments (helical) span residues 7 to 27 (IWLY…TGVI), 38 to 58 (LGLN…GAIL), 75 to 95 (AIMA…LAPN), 97 to 117 (GVMV…TTIV), 136 to 156 (LNQL…YIFA), 163 to 183 (WMLG…LFMP), 240 to 260 (ALIA…NTII), 276 to 296 (ASIL…LVAI), 309 to 329 (LFGN…NLFF), 340 to 360 (VICL…VVWV), 377 to 397 (VSTL…PILM), and 400 to 420 (IGIS…FLFV). Positions 438–457 (DLRDKNGQGGAAGKQQTVGT) are disordered.

The protein belongs to the major facilitator superfamily. Sugar transporter (TC 2.A.1.1) family.

The protein localises to the cell membrane. This is Putative metabolite transport protein YwtG (ywtG) from Bacillus subtilis (strain 168).